The sequence spans 192 residues: Ion-translocating oxidoreductase complex subunit B (192 aa).

Positions 1 to 26 (MNAIWIAVAAVSLLGLAFGAILGYAS) are hydrophobic. The 60-residue stretch at 32–91 (EDDPVVEKIDEILPQSQCGQCGYPGCRPYAEAISCNGEKINRCAPGGEAVMLKIAELLNV) folds into the 4Fe-4S domain. [4Fe-4S] cluster-binding residues include Cys49, Cys52, Cys57, Cys74, Cys117, Cys120, Cys123, Cys127, Cys147, Cys150, Cys153, and Cys157. 4Fe-4S ferredoxin-type domains lie at 108–137 (MVAV…GATR) and 138–167 (AMHT…LQPV).

This sequence belongs to the 4Fe4S bacterial-type ferredoxin family. RnfB subfamily. In terms of assembly, the complex is composed of six subunits: RsxA, RsxB, RsxC, RsxD, RsxE and RsxG. Requires [4Fe-4S] cluster as cofactor.

It is found in the cell inner membrane. Functionally, part of a membrane-bound complex that couples electron transfer with translocation of ions across the membrane. Required to maintain the reduced state of SoxR. The protein is Ion-translocating oxidoreductase complex subunit B of Escherichia coli O8 (strain IAI1).